We begin with the raw amino-acid sequence, 377 residues long: Queuine tRNA-ribosyltransferase (377 aa).

The Proton acceptor role is filled by Asp-89. Residues 89–93 (DSGGF), Asp-143, Gln-188, and Gly-215 contribute to the substrate site. The segment at 246–252 (GVGKPED) is RNA binding. Asp-265 (nucleophile) is an active-site residue. An RNA binding; important for wobble base 34 recognition region spans residues 270–274 (TRNAR). 4 residues coordinate Zn(2+): Cys-303, Cys-305, Cys-308, and His-334.

The protein belongs to the queuine tRNA-ribosyltransferase family. As to quaternary structure, homodimer. Within each dimer, one monomer is responsible for RNA recognition and catalysis, while the other monomer binds to the replacement base PreQ1. Zn(2+) serves as cofactor.

The catalysed reaction is 7-aminomethyl-7-carbaguanine + guanosine(34) in tRNA = 7-aminomethyl-7-carbaguanosine(34) in tRNA + guanine. It participates in tRNA modification; tRNA-queuosine biosynthesis. Catalyzes the base-exchange of a guanine (G) residue with the queuine precursor 7-aminomethyl-7-deazaguanine (PreQ1) at position 34 (anticodon wobble position) in tRNAs with GU(N) anticodons (tRNA-Asp, -Asn, -His and -Tyr). Catalysis occurs through a double-displacement mechanism. The nucleophile active site attacks the C1' of nucleotide 34 to detach the guanine base from the RNA, forming a covalent enzyme-RNA intermediate. The proton acceptor active site deprotonates the incoming PreQ1, allowing a nucleophilic attack on the C1' of the ribose to form the product. After dissociation, two additional enzymatic reactions on the tRNA convert PreQ1 to queuine (Q), resulting in the hypermodified nucleoside queuosine (7-(((4,5-cis-dihydroxy-2-cyclopenten-1-yl)amino)methyl)-7-deazaguanosine). This Acinetobacter baumannii (strain ACICU) protein is Queuine tRNA-ribosyltransferase.